The following is a 496-amino-acid chain: Lysine--tRNA ligase (496 aa).

Glu-409 and Glu-416 together coordinate Mg(2+).

Belongs to the class-II aminoacyl-tRNA synthetase family. As to quaternary structure, homodimer. It depends on Mg(2+) as a cofactor.

The protein resides in the cytoplasm. It catalyses the reaction tRNA(Lys) + L-lysine + ATP = L-lysyl-tRNA(Lys) + AMP + diphosphate. This Streptococcus pneumoniae (strain CGSP14) protein is Lysine--tRNA ligase.